A 213-amino-acid chain; its full sequence is Regulatory protein RecX (213 aa).

The protein belongs to the RecX family.

The protein localises to the cytoplasm. Modulates RecA activity. This chain is Regulatory protein RecX, found in Clostridium beijerinckii (strain ATCC 51743 / NCIMB 8052) (Clostridium acetobutylicum).